Here is a 398-residue protein sequence, read N- to C-terminus: Acetate kinase (398 aa).

Asn-10 is a binding site for Mg(2+). ATP is bound at residue Lys-17. Position 89 (Arg-89) interacts with substrate. The Proton donor/acceptor role is filled by Asp-148. ATP-binding positions include 208–212 (HLGNG), 283–285 (DCR), and 331–335 (GIGEN). A Mg(2+)-binding site is contributed by Glu-385.

This sequence belongs to the acetokinase family. Homodimer. It depends on Mg(2+) as a cofactor. The cofactor is Mn(2+).

It localises to the cytoplasm. It catalyses the reaction acetate + ATP = acetyl phosphate + ADP. The protein operates within metabolic intermediate biosynthesis; acetyl-CoA biosynthesis; acetyl-CoA from acetate: step 1/2. Catalyzes the formation of acetyl phosphate from acetate and ATP. Can also catalyze the reverse reaction. This chain is Acetate kinase, found in Histophilus somni (strain 2336) (Haemophilus somnus).